Reading from the N-terminus, the 549-residue chain is Dihydroxy-acid dehydratase (549 aa).

D78 serves as a coordination point for Mg(2+). Position 119 (C119) interacts with [2Fe-2S] cluster. Residues D120 and K121 each contribute to the Mg(2+) site. K121 is subject to N6-carboxylysine. C191 serves as a coordination point for [2Fe-2S] cluster. A Mg(2+)-binding site is contributed by E441. Catalysis depends on S466, which acts as the Proton acceptor.

It belongs to the IlvD/Edd family. Homodimer. [2Fe-2S] cluster is required as a cofactor. Mg(2+) serves as cofactor.

The enzyme catalyses (2R)-2,3-dihydroxy-3-methylbutanoate = 3-methyl-2-oxobutanoate + H2O. It catalyses the reaction (2R,3R)-2,3-dihydroxy-3-methylpentanoate = (S)-3-methyl-2-oxopentanoate + H2O. It participates in amino-acid biosynthesis; L-isoleucine biosynthesis; L-isoleucine from 2-oxobutanoate: step 3/4. It functions in the pathway amino-acid biosynthesis; L-valine biosynthesis; L-valine from pyruvate: step 3/4. Its function is as follows. Functions in the biosynthesis of branched-chain amino acids. Catalyzes the dehydration of (2R,3R)-2,3-dihydroxy-3-methylpentanoate (2,3-dihydroxy-3-methylvalerate) into 2-oxo-3-methylpentanoate (2-oxo-3-methylvalerate) and of (2R)-2,3-dihydroxy-3-methylbutanoate (2,3-dihydroxyisovalerate) into 2-oxo-3-methylbutanoate (2-oxoisovalerate), the penultimate precursor to L-isoleucine and L-valine, respectively. This Methanobrevibacter smithii (strain ATCC 35061 / DSM 861 / OCM 144 / PS) protein is Dihydroxy-acid dehydratase.